Reading from the N-terminus, the 157-residue chain is Arginine repressor (157 aa).

Belongs to the ArgR family.

It is found in the cytoplasm. It participates in amino-acid biosynthesis; L-arginine biosynthesis [regulation]. Functionally, regulates arginine biosynthesis genes. In Deinococcus radiodurans (strain ATCC 13939 / DSM 20539 / JCM 16871 / CCUG 27074 / LMG 4051 / NBRC 15346 / NCIMB 9279 / VKM B-1422 / R1), this protein is Arginine repressor.